The following is a 3411-amino-acid chain: MSGRKAQGKTLGVNMVRRGVRSLSNKIKQKTKQIGNRPGPSRGVQGFIFFFLFNILTGKKITAHLKRLWKMLDPRQGLAVLRKVKRVVASLMRGLSSRKRRSHDVLTVQFLILGMLLMTGGVTLVRKNRWLLLNVTSEDLGKTFSVGTGNCTTNILEAKYWCPDSMEYNCPNLSPREEPDDIDCWCYGVENVRVAYGKCDSAGRSRRSRRAIDLPTHENHGLKTRQEKWMTGRMGERQLQKIERWFVRNPFFAVTALTIAYLVGSNMTQRVVIALLVLAVGPAYSAHCIGITDRDFIEGVHGGTWVSATLEQDKCVTVMAPDKPSLDISLETVAIDRPAEVRKVCYNAVLTHVKINDKCPSTGEAHLAEENEGDNACKRTYSDRGWGNGCGLFGKGSIVACAKFTCAKSMSLFEVDQTKIQYVIRAQLHVGAKQENWNTDIKTLKFDALSGSQEVEFIGYGKATLECQVQTAVDFGNSYIAEMETESWIVDRQWAQDLTLPWQSGSGGVWREMHHLVEFEPPHAATIRVLALGNQEGSLKTALTGAMRVTKDTNDNNLYKLHGGHVSCRVKLSALTLKGTSYKICTDKMFFVKNPTDTGHGTVVMQVKVSKGAPCRIPVIVADDLTAAINKGILVTVNPIASTNDDEVLIEVNPPFGDSYIIVGRGDSRLTYQWHKEGSSIGKLFTQTMKGVERLAVMGDTAWDFSSAGGFFTSVGKGIHTVFGSAFQGLFGGLNWITKVIMGAVLIWVGINTRNMTMSMSMILVGVIMMFLSLGVGADQGCAINFGKRELKCGDGIFIFRDSDDWLNKYSYYPEDPVKLASIVKASFEEGKCGLNSVDSLEHEMWRSRADEINAIFEENEVDISVVVQDPKNVYQRGTHPFSRIRDGLQYGWKTWGKNLVFSPGRKNGSFIIDGKSRKECPFSNRVWNSFQIEEFGTGVFTTRVYMDAVFEYTIDCDGSILGAAVNGKKSAHGSPTFWMGSHEVNGTWMIHTLEALDYKECEWPLTHTIGTSVEESEMFMPRSIGGPVSSHNHIPGYKVQTNGPWMQVPLEVKREACPGTSVIIDGNCDGRGKSTRSTTDSGKVIPEWCCRSCTMPPVSFHGSDGCWYPMEIRPRKTHESHLVRSWVTAGEIHAVPFGLVSMMIAMEVVLRKRQGPKQMLVGGVVLLGAMLVGQVTLLDLLKLTVAVGLHFHEMNNGGDAMYMALIAAFSIRPGLLIGFGLRTLWSPRERLVLTLGAAMVEIALGGVMGGLWKYLNAVSLCILTINAVASRKASNTILPLMALLTPVTMAEVRLAAMFFCAVVIIGVLHQNFKDTSMQKTIPLVALTLTSYLGLTQPFLGLCAFLATRIFGRRSIPVNEALAAAGLVGVLAGLAFQEMENFLGPIAVGGLLMMLVSVAGRVDGLELKKLGEVSWEEEAEISGSSARYDVALSEQGEFKLLSEEKVPWDQVVMTSLALVGAALHPFALLLVLAGWLFHVRGARRSGDVLWDIPTPKIIEECEHLEDGIYGIFQSTFLGASQRGVGVAQGGVFHTMWHVTRGAFLVRNGKKLIPSWASVKEDLVAYGGSWKLEGRWDGEEEVQLIAAVPGKNVVNVQTKPSLFKVRNGGEIGAVALDYPSGTSGSPIVNRNGEVIGLYGNGILVGDNSFVSAISQTEVKEEGKEELQEIPTMLKKGMTTVLDFHPGAGKTRRFLPQILAECARRRLRTLVLAPTRVVLSEMKEAFHGLDVKFHTQAFSAHGSGREVIDAMCHATLTYRMLEPTRVVNWEVIIMDEAHFLDPASIAARGWAAHRARANESATILMTATPPGTSDEFPHSNGEIEDVQTDIPSEPWNTGHDWILADKRPTAWFLPSIRAANVMAASLRKAGKSVVVLNRKTFEREYPTIKQKKPDFILATDIAEMGANLCVERVLDCRTAFKPVLVDEGRKVAIKGPLRISASSAAQRRGRIGRNPNRDGDSYYYSEPTSENNAHHVCWLEASMLLDNMEVRGGMVAPLYGVEGTKTPVSPGEMRLRDDQRKVFRELVRNCDLPVWLSWQVAKAGLKTNDRKWCFEGPEEHEILNDSGETVKCRAPGGAKKPLRPRWCDERVSSDQSALSEFIKFAEGRRGAAEVLVVLSELPDFLAKKGGEAMDTISVFLHSEEGSRAYRNALSMMPEAMTIVMLFILAGLLTSGMVIFFMSPKGISRMSMAMGTMAGCGYLMFLGGVKPTHISYVMLIFFVLMVVVIPEPGQQRSIQDNQVAYLIIGILTLVSAVAANELGMLEKTKEDLFGKKNLIPSSASPWSWPDLDLKPGAAWTVYVGIVTMLSPMLHHWIKVEYGNLSLSGIAQSASVLSFMDKGIPFMKMNISVIMLLVSGWNSITVMPLLCGIGCAMLHWSLILPGIKAQQSKLAQRRVFHGVAENPVVDGNPTVDIEEAPEMPALYEKKLALYLLLALSLASVAMCRTPFSLAEGIVLASAALGPLIEGNTSLLWNGPMAVSMTGVMRGNHYAFVGVMYNLWKMKTGRRGSANGKTLGEVWKRELNLLDKRQFELYKRTDIVEVDRDTARRHLAEGKVDTGVAVSRGTAKLRWFHERGYVKLEGRVIDLGCGRGGWCYYAAAQKEVSGVKGFTLGRDGHEKPMNVQSLGWNIITFKDKTDIHRLEPVKCDTLLCDIGESSSSSVTEGERTVRVLDTVEKWLACGVDNFCVKVLAPYMPDVLEKLELLQRRFGGTVIRNPLSRNSTHEMYYVSGARSNVTFTVNQTSRLLMRRMRRPTGKVTLEADVILPIGTRSVETDKGPLDKEAIEERVERIKSEYMTSWFYDNDNPYRTWHYCGSYVTKTSGSAASMVNGVIKILTYPWDRIEEVTRMAMTDTTPFGQQRVFKEKVDTRAKDPPAGTRKIMKVVNRWLFRHLAREKNPRLCTKEEFIAKVRSHAAIGAYLEEQEQWKTANEAVQDPKFWELVDEERKLHQQGRCRTCVYNMMGKREKKLSEFGKAKGSRAIWYMWLGARYLEFEALGFLNEDHWASRENSGGGVEGIGLQYLGYVIRDLAAMDGGGFYADDTAGWDTRITEADLDDEQEILNYMSPHHKKLAQAVMEMTYKNKVVKVLRPAPGGKAYMDVISRRDQRGSGQVVTYALNTITNLKVQLIRMAEAEMVIHHQHVQDCDESVLTRLEAWLTEHGCDRLKRMAVSGDDCVVRPIDDRFGLALSHLNAMSKVRKDISEWQPSKGWNDWENVPFCSHHFHELQLKDGRRIVVPCREQDELIGRGRVSPGNGWMIKETACLSKAYANMWSLMYFHKRDMRLLSLAVSSAVPTSWVPQGRTTWSIHGKGEWMTTEDMLEVWNRVWITNNPHMQDKTMVKKWRDVPYLTKRQDKLCGSLIGMTNRATWASHIHLVIHRIRTLIGQEKYTDYLTVMDRYSVDADLQLGELI.

Residues 1 to 104 (MSGRKAQGKT…LSSRKRRSHD (104 aa)) are Cytoplasmic-facing. Residues 38–72 (PGPSRGVQGFIFFFLFNILTGKKITAHLKRLWKML) form a hydrophobic; homodimerization of capsid protein C region. The propeptide at 102-121 (SHDVLTVQFLILGMLLMTGG) is ER anchor for the capsid protein C, removed in mature form by serine protease NS3. Residues 105 to 125 (VLTVQFLILGMLLMTGGVTLV) traverse the membrane as a helical segment. Over 126-244 (RKNRWLLLNV…GERQLQKIER (119 aa)) the chain is Extracellular. N-linked (GlcNAc...) asparagine; by host glycans are attached at residues asparagine 134 and asparagine 150. A helical transmembrane segment spans residues 245 to 265 (WFVRNPFFAVTALTIAYLVGS). Residues 266–270 (NMTQR) lie on the Cytoplasmic side of the membrane. A helical membrane pass occupies residues 271–285 (VVIALLVLAVGPAYS). The Extracellular segment spans residues 286–730 (AHCIGITDRD…TVFGSAFQGL (445 aa)). Disulfide bonds link cysteine 288–cysteine 315, cysteine 345–cysteine 401, cysteine 345–cysteine 406, cysteine 359–cysteine 390, cysteine 377–cysteine 401, cysteine 377–cysteine 406, cysteine 467–cysteine 568, and cysteine 585–cysteine 615. The interval 383–396 (DRGWGNGCGLFGKG) is fusion peptide. Residues 731-751 (FGGLNWITKVIMGAVLIWVGI) form a helical membrane-spanning segment. The Extracellular segment spans residues 752–757 (NTRNMT). Residues 758 to 778 (MSMSMILVGVIMMFLSLGVGA) traverse the membrane as a helical segment. The Extracellular portion of the chain corresponds to 779–1132 (DQGCAINFGK…LVRSWVTAGE (354 aa)). Intrachain disulfides connect cysteine 782–cysteine 793, cysteine 833–cysteine 921, cysteine 957–cysteine 1002, cysteine 1058–cysteine 1107, cysteine 1069–cysteine 1091, and cysteine 1090–cysteine 1094. N-linked (GlcNAc...) asparagine; by host glycans are attached at residues asparagine 908 and asparagine 986. A helical membrane pass occupies residues 1133–1153 (IHAVPFGLVSMMIAMEVVLRK). The Cytoplasmic portion of the chain corresponds to 1154-1201 (RQGPKQMLVGGVVLLGAMLVGQVTLLDLLKLTVAVGLHFHEMNNGGDA). The chain crosses the membrane as a helical span at residues 1202–1222 (MYMALIAAFSIRPGLLIGFGL). Topologically, residues 1223–1287 (RTLWSPRERL…ILPLMALLTP (65 aa)) are lumenal. A helical membrane pass occupies residues 1288–1308 (VTMAEVRLAAMFFCAVVIIGV). Residues 1309–1355 (LHQNFKDTSMQKTIPLVALTLTSYLGLTQPFLGLCAFLATRIFGRRS) are Cytoplasmic-facing. Residues 1356 to 1376 (IPVNEALAAAGLVGVLAGLAF) form a helical membrane-spanning segment. Over 1377 to 1378 (QE) the chain is Lumenal. The helical transmembrane segment at 1379 to 1399 (MENFLGPIAVGGLLMMLVSVA) threads the bilayer. Residues 1400–1456 (GRVDGLELKKLGEVSWEEEAEISGSSARYDVALSEQGEFKLLSEEKVPWDQVVMTSL) lie on the Cytoplasmic side of the membrane. The tract at residues 1407 to 1446 (LKKLGEVSWEEEAEISGSSARYDVALSEQGEFKLLSEEKV) is interacts with and activates NS3 protease. The helical intramembrane region spans 1457-1477 (ALVGAALHPFALLLVLAGWLF). At 1478–2157 (HVRGARRSGD…RNALSMMPEA (680 aa)) the chain is on the cytoplasmic side. The region spanning 1485–1665 (SGDVLWDIPT…EVKEEGKEEL (181 aa)) is the Peptidase S7 domain. Active-site charge relay system; for serine protease NS3 activity residues include histidine 1537, aspartate 1561, and serine 1622. A Helicase ATP-binding domain is found at 1669–1825 (PTMLKKGMTT…HSNGEIEDVQ (157 aa)). Positions 1673 to 1676 (KKGM) are important for RNA-binding. Position 1682–1689 (1682–1689 (FHPGAGKT)) interacts with ATP. The DEAH box signature appears at 1773–1776 (DEAH). The 178-residue stretch at 1820 to 1997 (EIEDVQTDIP…VRGGMVAPLY (178 aa)) folds into the Helicase C-terminal domain. Lysine 1877 carries the N6-acetyllysine; by host modification. Residues 2158 to 2178 (MTIVMLFILAGLLTSGMVIFF) traverse the membrane as a helical segment. The Lumenal segment spans residues 2179–2186 (MSPKGISR). Residues 2187 to 2207 (MSMAMGTMAGCGYLMFLGGVK) constitute an intramembrane region (helical). The Lumenal portion of the chain corresponds to 2208–2209 (PT). A helical membrane pass occupies residues 2210-2230 (HISYVMLIFFVLMVVVIPEPG). Residues 2231–2241 (QQRSIQDNQVA) lie on the Cytoplasmic side of the membrane. Residues 2242 to 2262 (YLIIGILTLVSAVAANELGML) traverse the membrane as a helical segment. The Lumenal portion of the chain corresponds to 2263–2293 (EKTKEDLFGKKNLIPSSASPWSWPDLDLKPG). The segment at residues 2294-2314 (AAWTVYVGIVTMLSPMLHHWI) is an intramembrane region (helical). Over 2315–2360 (KVEYGNLSLSGIAQSASVLSFMDKGIPFMKMNISVIMLLVSGWNSI) the chain is Lumenal. Residues 2361–2381 (TVMPLLCGIGCAMLHWSLILP) traverse the membrane as a helical segment. Topologically, residues 2382–2421 (GIKAQQSKLAQRRVFHGVAENPVVDGNPTVDIEEAPEMPA) are cytoplasmic. A helical membrane pass occupies residues 2422-2442 (LYEKKLALYLLLALSLASVAM). Residues 2443–2445 (CRT) are Lumenal-facing. The chain crosses the membrane as a helical span at residues 2446 to 2466 (PFSLAEGIVLASAALGPLIEG). Residues 2467–3411 (NTSLLWNGPM…DADLQLGELI (945 aa)) are Cytoplasmic-facing. An mRNA cap 0-1 NS5-type MT domain is found at 2507-2771 (GSANGKTLGE…DVILPIGTRS (265 aa)). Serine 2562 serves as a coordination point for S-adenosyl-L-methionine. Serine 2562 is modified (phosphoserine). Lysine 2567 (for 2'-O-MTase activity) is an active-site residue. Glycine 2592, tryptophan 2593, threonine 2610, leucine 2611, aspartate 2637, and isoleucine 2638 together coordinate S-adenosyl-L-methionine. The active-site For 2'-O-MTase activity is aspartate 2652. Residue isoleucine 2653 coordinates S-adenosyl-L-methionine. Active-site for 2'-O-MTase activity residues include lysine 2688 and glutamate 2724. Tyrosine 2726 is an S-adenosyl-L-methionine binding site. Residues 2878 to 2911 (RKIMKVVNRWLFRHLAREKNPRLCTKEEFIAKVR) carry the Nuclear localization signal motif. The Zn(2+) site is built by glutamate 2945, histidine 2949, cysteine 2954, and cysteine 2957. Residues 3035–3187 (GGFYADDTAG…RPIDDRFGLA (153 aa)) enclose the RdRp catalytic domain. 3 residues coordinate Zn(2+): histidine 3222, cysteine 3238, and cysteine 3357.

The protein in the N-terminal section; belongs to the class I-like SAM-binding methyltransferase superfamily. mRNA cap 0-1 NS5-type methyltransferase family. As to quaternary structure, homodimer. Interacts (via N-terminus) with host EXOC1 (via C-terminus); this interaction results in EXOC1 degradation through the proteasome degradation pathway. Forms heterodimers with envelope protein E in the endoplasmic reticulum and Golgi. In terms of assembly, homodimer; in the endoplasmic reticulum and Golgi. Interacts with protein prM. Interacts with non-structural protein 1. As to quaternary structure, homodimer; Homohexamer when secreted. Interacts with envelope protein E. Interacts (via N-terminus) with serine protease NS3. In terms of assembly, forms a heterodimer with serine protease NS3. May form homooligomers. As to quaternary structure, forms a heterodimer with NS2B. Interacts with non-structural protein 2A (via N-terminus). Interacts with NS4B. Interacts with unphosphorylated RNA-directed RNA polymerase NS5; this interaction stimulates RNA-directed RNA polymerase NS5 guanylyltransferase activity. NS3 interacts with host PDCD6IP; this interaction contributes to virion release. Interacts with serine protease NS3. In terms of assembly, homodimer. Interacts with host STAT2; this interaction prevents the establishment of cellular antiviral state. Interacts with serine protease NS3. Interacts with host TRIM23; this interaction leads to NS5 ubiquitination. Specific enzymatic cleavages in vivo yield mature proteins. The nascent capsid protein C contains a C-terminal hydrophobic domain that act as a signal sequence for translocation of prM into the lumen of the ER. Mature capsid protein C is cleaved at a site upstream of this hydrophobic domain by NS3. prM is cleaved in post-Golgi vesicles by a host furin, releasing the mature small envelope protein M, and peptide pr. Non-structural protein 2A-alpha, a C-terminally truncated form of non-structural protein 2A, results from partial cleavage by NS3. Specific enzymatic cleavages in vivo yield mature proteins peptide 2K acts as a signal sequence and is removed from the N-terminus of NS4B by the host signal peptidase in the ER lumen. Signal cleavage at the 2K-4B site requires a prior NS3 protease-mediated cleavage at the 4A-2K site. In terms of processing, cleaved in post-Golgi vesicles by a host furin, releasing the mature small envelope protein M, and peptide pr. This cleavage is incomplete as up to 30% of viral particles still carry uncleaved prM. Post-translationally, N-glycosylated. N-glycosylated. The excreted form is glycosylated and this is required for efficient secretion of the protein from infected cells. In terms of processing, polyubiquitinated; ubiquitination is probably mediated by host TRIM23 and is prerequisite for NS5-STAT2 interaction. NS5 is not ISGylated or sumoylated. Post-translationally, acetylated by host KAT5. Acetylation modulates NS3 RNA-binding and unwinding activities and plays an important positive role for viral replication. Phosphorylated on serines residues. This phosphorylation may trigger NS5 nuclear localization.

It is found in the virion. Its subcellular location is the host nucleus. The protein localises to the host cytoplasm. It localises to the host perinuclear region. The protein resides in the secreted. It is found in the virion membrane. Its subcellular location is the host endoplasmic reticulum membrane. The enzyme catalyses Selective hydrolysis of -Xaa-Xaa-|-Yaa- bonds in which each of the Xaa can be either Arg or Lys and Yaa can be either Ser or Ala.. The catalysed reaction is RNA(n) + a ribonucleoside 5'-triphosphate = RNA(n+1) + diphosphate. It carries out the reaction a ribonucleoside 5'-triphosphate + H2O = a ribonucleoside 5'-diphosphate + phosphate + H(+). It catalyses the reaction ATP + H2O = ADP + phosphate + H(+). The enzyme catalyses a 5'-end (5'-triphosphoguanosine)-ribonucleoside in mRNA + S-adenosyl-L-methionine = a 5'-end (N(7)-methyl 5'-triphosphoguanosine)-ribonucleoside in mRNA + S-adenosyl-L-homocysteine. The catalysed reaction is a 5'-end (N(7)-methyl 5'-triphosphoguanosine)-ribonucleoside in mRNA + S-adenosyl-L-methionine = a 5'-end (N(7)-methyl 5'-triphosphoguanosine)-(2'-O-methyl-ribonucleoside) in mRNA + S-adenosyl-L-homocysteine + H(+). In terms of biological role, plays a role in virus budding by binding to the cell membrane and gathering the viral RNA into a nucleocapsid that forms the core of a mature virus particle. During virus entry, may induce genome penetration into the host cytoplasm after hemifusion induced by the surface proteins. Can migrate to the cell nucleus where it modulates host functions. Inhibits RNA silencing by interfering with host Dicer. Functionally, prevents premature fusion activity of envelope proteins in trans-Golgi by binding to envelope protein E at pH6.0. After virion release in extracellular space, gets dissociated from E dimers. Its function is as follows. Acts as a chaperone for envelope protein E during intracellular virion assembly by masking and inactivating envelope protein E fusion peptide. prM is the only viral peptide matured by host furin in the trans-Golgi network probably to avoid catastrophic activation of the viral fusion activity in acidic Golgi compartment prior to virion release. prM-E cleavage is inefficient, and many virions are only partially matured. These uncleaved prM would play a role in immune evasion. In terms of biological role, may play a role in virus budding. Exerts cytotoxic effects by activating a mitochondrial apoptotic pathway through M ectodomain. May display a viroporin activity. Binds to host cell surface receptor and mediates fusion between viral and cellular membranes. Envelope protein is synthesized in the endoplasmic reticulum in the form of heterodimer with protein prM. They play a role in virion budding in the ER, and the newly formed immature particle is covered with 60 spikes composed of heterodimer between precursor prM and envelope protein E. The virion is transported to the Golgi apparatus where the low pH causes dissociation of PrM-E heterodimers and formation of E homodimers. prM-E cleavage is inefficient, and many virions are only partially matured. These uncleaved prM would play a role in immune evasion. Functionally, involved in immune evasion, pathogenesis and viral replication. Once cleaved off the polyprotein, is targeted to three destinations: the viral replication cycle, the plasma membrane and the extracellular compartment. Essential for viral replication. Required for formation of the replication complex and recruitment of other non-structural proteins to the ER-derived membrane structures. Excreted as a hexameric lipoparticle that plays a role against host immune response. Antagonizing the complement function. Binds to the host macrophages and dendritic cells. Inhibits signal transduction originating from Toll-like receptor 3 (TLR3). Its function is as follows. Component of the viral RNA replication complex that functions in virion assembly and antagonizes the host immune response. In terms of biological role, required cofactor for the serine protease function of NS3. May have membrane-destabilizing activity and form viroporins. Displays three enzymatic activities: serine protease, NTPase and RNA helicase. NS3 serine protease, in association with NS2B, performs its autocleavage and cleaves the polyprotein at dibasic sites in the cytoplasm: C-prM, NS2A-NS2B, NS2B-NS3, NS3-NS4A, NS4A-2K and NS4B-NS5. NS3 RNA helicase binds RNA and unwinds dsRNA in the 3' to 5' direction. Also plays a role in virus assembly. Functionally, regulates the ATPase activity of the NS3 helicase activity. NS4A allows NS3 helicase to conserve energy during unwinding. Its function is as follows. Functions as a signal peptide for NS4B and is required for the interferon antagonism activity of the latter. In terms of biological role, induces the formation of ER-derived membrane vesicles where the viral replication takes place. Inhibits interferon (IFN)-induced host STAT1 phosphorylation and nuclear translocation, thereby preventing the establishment of cellular antiviral state by blocking the IFN-alpha/beta pathway. Replicates the viral (+) and (-) RNA genome, and performs the capping of genomes in the cytoplasm. NS5 methylates viral RNA cap at guanine N-7 and ribose 2'-O positions. Besides its role in RNA genome replication, also prevents the establishment of cellular antiviral state by blocking the interferon-alpha/beta (IFN-alpha/beta) signaling pathway. IFN-I induces binding of NS5 to host IFN-activated transcription factor STAT2, preventing its transcriptional activity. Host TRIM23 is the E3 ligase that interacts with and polyubiquitinates NS5 to promote its binding to STAT2 and trigger IFN-I signaling inhibition. The sequence is that of Genome polyprotein from Aedes aegypti (Yellowfever mosquito).